The sequence spans 425 residues: Serine--tRNA ligase (425 aa).

230-232 (TAE) lines the L-serine pocket. ATP is bound at residue 261–263 (RAE). Residue Glu284 participates in L-serine binding. 348–351 (EISS) is an ATP binding site. An L-serine-binding site is contributed by Ser384.

This sequence belongs to the class-II aminoacyl-tRNA synthetase family. Type-1 seryl-tRNA synthetase subfamily. In terms of assembly, homodimer. The tRNA molecule binds across the dimer.

The protein localises to the cytoplasm. It carries out the reaction tRNA(Ser) + L-serine + ATP = L-seryl-tRNA(Ser) + AMP + diphosphate + H(+). The enzyme catalyses tRNA(Sec) + L-serine + ATP = L-seryl-tRNA(Sec) + AMP + diphosphate + H(+). The protein operates within aminoacyl-tRNA biosynthesis; selenocysteinyl-tRNA(Sec) biosynthesis; L-seryl-tRNA(Sec) from L-serine and tRNA(Sec): step 1/1. Catalyzes the attachment of serine to tRNA(Ser). Is also able to aminoacylate tRNA(Sec) with serine, to form the misacylated tRNA L-seryl-tRNA(Sec), which will be further converted into selenocysteinyl-tRNA(Sec). This is Serine--tRNA ligase from Desulforudis audaxviator (strain MP104C).